We begin with the raw amino-acid sequence, 431 residues long: Na(+)-translocating NADH-quinone reductase subunit F (431 aa).

The chain crosses the membrane as a helical span at residues Ile-10–Ile-30. The 93-residue stretch at Cys-41–Tyr-133 folds into the 2Fe-2S ferredoxin-type domain. The [2Fe-2S] cluster site is built by Cys-76, Cys-82, Cys-85, and Cys-117. The 151-residue stretch at Ala-136–Lys-286 folds into the FAD-binding FR-type domain.

The protein belongs to the NqrF family. In terms of assembly, composed of six subunits; NqrA, NqrB, NqrC, NqrD, NqrE and NqrF. Requires [2Fe-2S] cluster as cofactor. FAD serves as cofactor.

Its subcellular location is the cell inner membrane. It catalyses the reaction a ubiquinone + n Na(+)(in) + NADH + H(+) = a ubiquinol + n Na(+)(out) + NAD(+). NQR complex catalyzes the reduction of ubiquinone-1 to ubiquinol by two successive reactions, coupled with the transport of Na(+) ions from the cytoplasm to the periplasm. The first step is catalyzed by NqrF, which accepts electrons from NADH and reduces ubiquinone-1 to ubisemiquinone by a one-electron transfer pathway. The polypeptide is Na(+)-translocating NADH-quinone reductase subunit F (Chlamydia caviae (strain ATCC VR-813 / DSM 19441 / 03DC25 / GPIC) (Chlamydophila caviae)).